Reading from the N-terminus, the 612-residue chain is DNA mismatch repair protein MutL (612 aa).

This sequence belongs to the DNA mismatch repair MutL/HexB family.

In terms of biological role, this protein is involved in the repair of mismatches in DNA. It is required for dam-dependent methyl-directed DNA mismatch repair. May act as a 'molecular matchmaker', a protein that promotes the formation of a stable complex between two or more DNA-binding proteins in an ATP-dependent manner without itself being part of a final effector complex. This chain is DNA mismatch repair protein MutL, found in Bartonella quintana (strain Toulouse) (Rochalimaea quintana).